A 676-amino-acid chain; its full sequence is Envelope glycoprotein (676 aa).

A signal peptide spans Met1–Ser32. Residues Ile33–Gln650 lie on the Extracellular side of the membrane. The N-linked (GlcNAc...) asparagine; by host glycan is linked to Asn40. Disulfide bonds link Cys53/Cys609, Cys108/Cys135, Cys121/Cys147, Cys511/Cys556, and Cys601/Cys608. A receptor-binding region spans residues Arg54 to Glu201. N-linked (GlcNAc...) asparagine; by host glycans are attached at residues Asn204, Asn228, Asn238, Asn257, Asn268, Asn296, Asn317, Asn333, Asn346, Asn386, and Asn413. A mucin-like region region spans residues Glu305–Thr485. Polar residues predominate over residues Arg314–Thr335. Positions Arg314 to Glu337 are disordered. The segment at Thr370–Lys478 is disordered. The span at Asp414–Ala427 shows a compositional bias: low complexity. Residues Asn436, Asn454, and Asn462 are each glycosylated (N-linked (GlcNAc...) asparagine; by host). Residues Ala447–Thr464 are compositionally biased toward polar residues. The interval Gly524–Ala539 is fusion peptide. The stretch at Leu554 to Gln595 forms a coiled coil. N-linked (GlcNAc...) asparagine; by host glycosylation occurs at Asn563. The stretch at Trp615–Thr634 forms a coiled coil. N-linked (GlcNAc...) asparagine; by host glycosylation is present at Asn618. Residues Trp651 to Ile671 form a helical membrane-spanning segment. Residues Cys670 and Cys672 are each lipidated (S-palmitoyl cysteine; by host). Residues Cys672 to Phe676 lie on the Cytoplasmic side of the membrane.

This sequence belongs to the filoviruses glycoprotein family. In terms of assembly, homotrimer; each monomer consists of a GP1 and a GP2 subunit linked by disulfide bonds. The resulting peplomers (GP1,2) protrude from the virus surface as spikes. Interacts with host integrin alpha-V/ITGAV. Interacts with host CLEC10A. Binds also to host CD209 and CLEC4M/DC-SIGN(R). Interacts with host FOLR1. Interacts with BST2; this interaction inhibits the antiviral effect of BST2 and this allows viral release from infected cells. Interacts with host FCN1; this interaction enhances viral entry. Interacts with host TLR4; this interaction induces cell death in T-lymphocytes or proinflammatory cytokines and SOCS1 production in monocytes. Interacts with host entry receptor NPC1. As to quaternary structure, GP1 and GP2delta are part of GP1,2delta soluble complexes released by ectodomain shedding. The signal peptide region modulates GP's high mannose glycosylation, thereby determining the efficiency of the interactions with DC-SIGN(R). In terms of processing, N-glycosylated. Post-translationally, O-glycosylated in the mucin-like region. Palmitoylation of GP2 is not required for its function. In terms of processing, specific enzymatic cleavages in vivo yield mature proteins. The precursor is processed into GP1 and GP2 by host cell furin in the trans Golgi, and maybe by other host proteases, to yield the mature GP1 and GP2 proteins. The cleavage site corresponds to the furin optimal cleavage sequence [KR]-X-[KR]-R. This cleavage does not seem to be required for function. After the internalization of the virus into cell endosomes, GP1 C-terminus is removed by the endosomal proteases cathepsin B, cathepsin L, or both, leaving a 19-kDa N-terminal fragment which is further digested by cathepsin B. Proteolytic processing of GP1,2 by host ADAM17 can remove the transmembrane anchor of GP2 and leads to shedding of complexes consisting in GP1 and truncated GP2 (GP1,2delta).

It localises to the virion membrane. The protein resides in the host cell membrane. The protein localises to the secreted. Trimeric GP1,2 complexes form the virion surface spikes and mediate the viral entry processes, with GP1 acting as the receptor-binding subunit and GP2 as the membrane fusion subunit. At later times of infection, down-regulates the expression of various host cell surface molecules that are essential for immune surveillance and cell adhesion. Down-modulates several integrins including ITGA1, ITGA2, ITGA3, ITGA4, ITGA5, ITGA6, ITGAV and ITGB1. This decrease in cell adhesion molecules may lead to cell detachment, contributing to the disruption of blood vessel integrity and hemorrhages developed during infection (cytotoxicity). Interacts with host TLR4 and thereby stimulates the differentiation and activation of monocytes leading to bystander death of T-lymphocytes. Down-regulates as well the function of host natural killer cells. Counteracts the antiviral effect of host BST2/tetherin that restricts release of progeny virions from infected cells. However, cooperates with VP40 and host BST2 to activate canonical NF-kappa-B pathway in a manner dependent on neddylation. Functionally, functions as a decoy for anti-GP1,2 antibodies thereby contributing to viral immune evasion. Interacts and activates host macrophages and dendritic cells inducing up-regulation of cytokine transcription. This effect is mediated throught activation of host TLR4. In terms of biological role, responsible for binding to the receptor(s) on target cells. Interacts with CD209/DC-SIGN and CLEC4M/DC-SIGNR which act as cofactors for virus entry into dendritic cells (DCs) and endothelial cells. Binding to the macrophage specific lectin CLEC10A also seems to enhance virus infectivity. Interaction with FOLR1/folate receptor alpha may be a cofactor for virus entry in some cell types, although results are contradictory. Members of the Tyro3 receptor tyrosine kinase family also seem to be cell entry factors in filovirus infection. Once attached, the virions are internalized through clathrin-dependent endocytosis and/or macropinocytosis. After internalization of the virus into the endosomes of the host cell, proteolysis of GP1 by two cysteine proteases, CTSB/cathepsin B and CTSL/cathepsin L removes the glycan cap and allows GP1 binding to the host entry receptor NPC1. NPC1-binding, Ca(2+) and acidic pH induce a conformational change of GP2, which unmasks its fusion peptide and permit membranes fusion. Its function is as follows. Acts as a class I viral fusion protein. Under the current model, the protein has at least 3 conformational states: pre-fusion native state, pre-hairpin intermediate state, and post-fusion hairpin state. During viral and target cell membrane fusion, the coiled coil regions (heptad repeats) assume a trimer-of-hairpins structure, positioning the fusion peptide in close proximity to the C-terminal region of the ectodomain. The formation of this structure appears to drive apposition and subsequent fusion of viral and target cell membranes. Responsible for penetration of the virus into the cell cytoplasm by mediating the fusion of the membrane of the endocytosed virus particle with the endosomal membrane. Low pH in endosomes induces an irreversible conformational change in GP2, releasing the fusion hydrophobic peptide. The protein is Envelope glycoprotein (GP) of Zaire ebolavirus (strain Kikwit-95) (ZEBOV).